We begin with the raw amino-acid sequence, 239 residues long: Fatty acid metabolism regulator protein (239 aa).

Residues Lys6–Phe74 enclose the HTH gntR-type domain. The H-T-H motif DNA-binding region spans Glu34–Gln53.

In terms of assembly, homodimer.

Its subcellular location is the cytoplasm. Multifunctional regulator of fatty acid metabolism. In Shewanella denitrificans (strain OS217 / ATCC BAA-1090 / DSM 15013), this protein is Fatty acid metabolism regulator protein.